The primary structure comprises 361 residues: DNA replication and repair protein RecF (361 aa).

30–37 (GDNAQGKT) is a binding site for ATP.

Belongs to the RecF family.

The protein resides in the cytoplasm. Its function is as follows. The RecF protein is involved in DNA metabolism; it is required for DNA replication and normal SOS inducibility. RecF binds preferentially to single-stranded, linear DNA. It also seems to bind ATP. This Clostridium novyi (strain NT) protein is DNA replication and repair protein RecF.